Here is a 262-residue protein sequence, read N- to C-terminus: Probable dihydroorotate dehydrogenase B (NAD(+)), electron transfer subunit (262 aa).

In terms of domain architecture, FAD-binding FR-type spans 4-97 (VKPIPAEVVE…RGPYGKPFEV (94 aa)). The [2Fe-2S] cluster site is built by C217, C222, C225, and C234.

Belongs to the PyrK family. Heterotetramer of 2 PyrK and 2 PyrD type B subunits. [2Fe-2S] cluster is required as a cofactor. The cofactor is FAD.

Its pathway is pyrimidine metabolism; UMP biosynthesis via de novo pathway; orotate from (S)-dihydroorotate (NAD(+) route): step 1/1. In terms of biological role, responsible for channeling the electrons from the oxidation of dihydroorotate from the FMN redox center in the PyrD type B subunit to the ultimate electron acceptor NAD(+). This is Probable dihydroorotate dehydrogenase B (NAD(+)), electron transfer subunit from Methanopyrus kandleri (strain AV19 / DSM 6324 / JCM 9639 / NBRC 100938).